A 124-amino-acid polypeptide reads, in one-letter code: Small ribosomal subunit protein uS13 (124 aa).

A disordered region spans residues 95-124; the sequence is GLPVRGQRTKTNARTRKGPKRTIAGKKKAK.

This sequence belongs to the universal ribosomal protein uS13 family. As to quaternary structure, part of the 30S ribosomal subunit. Forms a loose heterodimer with protein S19. Forms two bridges to the 50S subunit in the 70S ribosome.

Located at the top of the head of the 30S subunit, it contacts several helices of the 16S rRNA. In the 70S ribosome it contacts the 23S rRNA (bridge B1a) and protein L5 of the 50S subunit (bridge B1b), connecting the 2 subunits; these bridges are implicated in subunit movement. Contacts the tRNAs in the A and P-sites. The protein is Small ribosomal subunit protein uS13 of Rhodococcus jostii (strain RHA1).